The sequence spans 329 residues: UDP-N-acetylenolpyruvoylglucosamine reductase (329 aa).

The 165-residue stretch at 28–192 folds into the FAD-binding PCMH-type domain; it reads RVGGPADLLC…ARVEVRLHAG (165 aa). Arg-172 is a catalytic residue. The segment at 202-227 is disordered; that stretch reads REDRERRRATQPLDRPTFGSTFTNPP. The active-site Proton donor is Ser-221. Residue Glu-291 is part of the active site. The interval 307–329 is disordered; that stretch reads DGHAAAGGGPGAASGGVRPPEAT. Over residues 311–320 the composition is skewed to gly residues; sequence AAGGGPGAAS.

It belongs to the MurB family. FAD serves as cofactor.

The protein localises to the cytoplasm. It catalyses the reaction UDP-N-acetyl-alpha-D-muramate + NADP(+) = UDP-N-acetyl-3-O-(1-carboxyvinyl)-alpha-D-glucosamine + NADPH + H(+). The protein operates within cell wall biogenesis; peptidoglycan biosynthesis. In terms of biological role, cell wall formation. This Anaeromyxobacter sp. (strain K) protein is UDP-N-acetylenolpyruvoylglucosamine reductase.